The chain runs to 316 residues: Olfactory receptor 6B9 (316 aa).

Over 1-22 (MENITNISEFILMGFPTAPWLQ) the chain is Extracellular. N-linked (GlcNAc...) asparagine glycans are attached at residues N3 and N6. The chain crosses the membrane as a helical span at residues 23 to 43 (ILLFSIFFITYVFVLLENLVI). Topologically, residues 44 to 64 (ILTVWVTGSLHKPMYYFLSTM) are cytoplasmic. A helical membrane pass occupies residues 65–85 (SFLEAWYISVTVPKMLAGFLF). The Extracellular portion of the chain corresponds to 86–97 (RPNTISFLGCMT). Cysteines 95 and 187 form a disulfide. The helical transmembrane segment at 98–118 (QLYFFMSLACTECVLLAAMAY) threads the bilayer. Topologically, residues 119-132 (DRYVAICWPLRYPV) are cytoplasmic. Residues 133-153 (MMTTGFCVQLTISSWVSGFTI) traverse the membrane as a helical segment. Over 154-199 (SMAKVYFISRVAFCGNNVLNHFFCDVSPILKLACMNLSMAETVDFA) the chain is Extracellular. A helical transmembrane segment spans residues 200–220 (LAIVILIFPLSATVLSYGFIV). At 221 to 237 (STVLQIPSATGQRKAFS) the chain is on the cytoplasmic side. The chain crosses the membrane as a helical span at residues 238-258 (TCASHLTVVVIFYTAVIFMYV). The Extracellular portion of the chain corresponds to 259 to 269 (RPRAIASFNSN). The chain crosses the membrane as a helical span at residues 270–290 (KLISAIYAVFTPMLNPIIYCL). Residues 291–316 (RNKEVKDAIRKTIAGGRAPALGESIS) are Cytoplasmic-facing.

This sequence belongs to the G-protein coupled receptor 1 family. Olfactory epithelium.

It is found in the cell membrane. Odorant receptor. The chain is Olfactory receptor 6B9 from Mus musculus (Mouse).